The chain runs to 361 residues: Nuclear pore complex protein NUP43 (361 aa).

The tract at residues 51 to 73 (IQSLDPNPRGNHNTNPLIESLSS) is disordered. 3 WD repeats span residues 132–173 (FHVG…YRKV), 177–215 (NGLV…EAVS), and 225–265 (KTSA…QPIV).

In terms of assembly, part of the nuclear pore complex (NPC). The NPC has an eight-fold symmetrical structure comprising a central transport channel and two rings, the cytoplasmic and nuclear rings, to which eight filaments are attached. The cytoplasmic filaments have loose ends, while the nuclear filaments are joined in a distal ring, forming a nuclear basket. NPCs are highly dynamic in configuration and composition, and can be devided in 3 subcomplexes, the NUP62 subcomplex, the NUP107-160 subcomplex and the NUP93 subcomplex, containing approximately 30 different nucleoporin proteins.

Its subcellular location is the nucleus envelope. The protein resides in the nucleus. It is found in the nuclear pore complex. The polypeptide is Nuclear pore complex protein NUP43 (Arabidopsis thaliana (Mouse-ear cress)).